The primary structure comprises 227 residues: Prolactin-5A1 (227 aa).

Positions Met-1–Ser-27 are cleaved as a signal peptide. Asn-47 carries N-linked (GlcNAc...) asparagine glycosylation. Cysteines 85 and 204 form a disulfide.

This sequence belongs to the somatotropin/prolactin family. Expressed specifically in placenta. Highly expressed in invasive trophoblast cells lining the central placental vessel.

It localises to the secreted. The protein is Prolactin-5A1 (Prl5a1) of Rattus norvegicus (Rat).